The primary structure comprises 564 residues: H/ACA ribonucleoprotein complex non-core subunit NAF1 (564 aa).

Disordered stretches follow at residues 1–29 (MESE…ELGK), 108–218 (LVVQ…DSEG), 238–264 (DEDD…KVRG), 387–489 (ASWE…HPSY), and 538–564 (PHMY…PPPS). The segment covering 146–157 (ASGLSLLAAYSS) has biased composition (low complexity). Residues 238–249 (DEDDEDFDEDGA) show a composition bias toward acidic residues. At threonine 250 the chain carries Phosphothreonine. Residue serine 254 is modified to Phosphoserine. The segment covering 388–402 (SWEHDVEPPARYVDH) has biased composition (basic and acidic residues). Serine 403 is subject to Phosphoserine. A compositionally biased stretch (low complexity) spans 426 to 446 (STDSVDTVTSVATTATKASSV). Threonine 427 is modified (phosphothreonine). Serine 429 carries the phosphoserine modification. Threonine 432 carries the post-translational modification Phosphothreonine. A compositionally biased stretch (polar residues) spans 468 to 489 (PSINQHNQNQPQDEQYNFHPSY). The segment covering 538–553 (PHMYPPPPPFAPPPPN) has biased composition (pro residues). The segment covering 554–564 (NQSHQGQPPPS) has biased composition (polar residues).

It belongs to the NAF1 family. In terms of assembly, during assembly of the complex, component of the box H/ACA small nucleolar ribonucleoprotein (H/ACA snoRNP) complex.

The protein resides in the nucleus. Functionally, RNA-binding protein required for the maturation of the box H/ACA small nucleolar ribonucleoprotein (H/ACA snoRNP) complex and ribosome biogenesis. During assembly of the H/ACA snoRNP complex it associates with the complex and dissociates during complex maturation, becoming replaced by Gar1 to yield mature H/ACA snoRNP complex. The polypeptide is H/ACA ribonucleoprotein complex non-core subunit NAF1 (Drosophila melanogaster (Fruit fly)).